The following is a 461-amino-acid chain: A-type ATP synthase subunit B (461 aa).

This sequence belongs to the ATPase alpha/beta chains family. In terms of assembly, has multiple subunits with at least A(3), B(3), C, D, E, F, H, I and proteolipid K(x).

The protein resides in the cell membrane. Component of the A-type ATP synthase that produces ATP from ADP in the presence of a proton gradient across the membrane. The B chain is a regulatory subunit. This is A-type ATP synthase subunit B from Nitrosopumilus maritimus (strain SCM1).